The following is a 1077-amino-acid chain: MHQPPESTAAAAAAADISARKMAHPAMFPRRGSGGGSASALNAAGTGVSGAAPSSEDFPPPSLLQPPPPAASSTQGPQPPPPQSLNLLSQAQLQGQPLAPGGTQMKKKSGFQITSVTPAQISASISSNNSIAEDTESYDDLDESHTEDLSSSEILDVSLSRATDLGEPERSSSEETLNNFQEAETPGAVSPNQPHLPQPHLPHLPQQNVVINGNAHPHHLHHHHHPHHGHHLHHGHHHSSHAAVAGPSIPGGPPSSPVSRKLSTTGSSDGGVPVAPPPAVPSSGLPASVMTNIRTPSTTGSLGINSVTGTSATNNVNIAAVGSFSPSVTNSVHGNANINTSNIPNAASISGGPGVTSVVNSSILSGMGNGTVSSSPVANSVLNAAAGITVGVVSSQQQQQQQQQPTVNTSRFRVVKLDSTSEPFKKGRWTCTEFYEKENAVPATEGVAINKVVETVKQTPTEASSSERESTSGSSVSSSVSTLSHYTESVGSGEMMGAPAVVAPQQPPLPPAPPGLQGVALQQLEFSSPAPQSIAAVSMPQSISQSQMSQVQLQPQELSFQQKQTLQPVPLQATMSAATGIQPSPVSVVGVTAAVGQQPSVSSLAQPQLPYSQTAPPVQTPLPGAPPQQLQYGQQQPMVPAQIAPGHGQPVTQNPTSEYVQQQQQPIFQAALSSGQSSSTGTGAGISVIPVAQAQGIQLPGQPTAVQTQPAGAAGQPIGQAQTAVSTVPTGGQIASIGQQANIPTAVQQPSTQVTPSVIQQGAPPSSQVVLPAPTGIIHQGVQTRASSLPQQLVIAPQSTLVTVPPQPQGVETVAQGVVSQQLPTGSPLPSASTISVTNQVSSAAPSGMPSVPTNLVPPQNIAQPPATQNGSLVQSVSQSPLIATNINLPLAQQIPLSSTQFSTQSLAQAIGSQMEDARRPAEPSLGGLPQTMSGDSGGMSAVSDGSSSSLAAPASLFPLKVLPLTTPLVDGEDESSGASVVAIDNKIEQAMDLVKSHLMYAVREEVEVLKEQIKELIEKNSQLEQENNLLKTLASPEQLAQFQAQLQTGSPPATTQPQGTTQPPAQPASQGSGSTA.

A required for interaction with TGFBR1 and promotion of TGF-beta signaling region spans residues 1-98 (MHQPPESTAA…SQAQLQGQPL (98 aa)). Disordered stretches follow at residues 22 to 112 (MAHP…SGFQ), 125 to 283 (ISSN…VPSS), 458 to 492 (QTPTEASSSERESTSGSSVSSSVSTLSHYTESVGS), 842 to 874 (SSAAPSGMPSVPTNLVPPQNIAQPPATQNGSLV), and 909 to 947 (QAIGSQMEDARRPAEPSLGGLPQTMSGDSGGMSAVSDGS). Residues 58-70 (FPPPSLLQPPPPA) are compositionally biased toward pro residues. Over residues 84-96 (SLNLLSQAQLQGQ) the composition is skewed to low complexity. Over residues 133-142 (EDTESYDDLD) the composition is skewed to acidic residues. Basic residues predominate over residues 216–240 (HPHHLHHHHHPHHGHHLHHGHHHSS). Ser263 is modified (phosphoserine). The segment covering 471–489 (TSGSSVSSSVSTLSHYTES) has biased composition (low complexity). The span at 852-874 (VPTNLVPPQNIAQPPATQNGSLV) shows a compositional bias: polar residues. Over residues 933-947 (MSGDSGGMSAVSDGS) the composition is skewed to low complexity. The interval 1010–1031 (LKEQIKELIEKNSQLEQENNLL) is leucine-zipper. Positions 1042 to 1077 (QFQAQLQTGSPPATTQPQGTTQPPAQPASQGSGSTA) are disordered. Low complexity predominate over residues 1048-1077 (QTGSPPATTQPQGTTQPPAQPASQGSGSTA).

It belongs to the TSC-22/Dip/Bun family. As to quaternary structure, forms homodimers. Forms heterodimers. Component of a complex composed of TSC22D1 (via N-terminus), TGFBR1 and TGFBR2; the interaction between TSC22D1 and TGFBR1 is inhibited by SMAD7 and promoted by TGFB1. Interacts with SMAD7; the interaction requires TGF-beta and the interaction is inhibited by TGFBR1. Interacts with TPT1/fortilin; interaction results in the destabilization of TSC22D1 protein and prevents TSC22D1-mediated apoptosis. Interacts with SMAD4 (via N-terminus). Interacts with ACVRL1/ALK1, ACVR1/ALK2, BMPR1A/ALK3, ACVR1B/ALK4, BMPR1B/ALK6, ACVR2A/ACTRII, and BMPR2. Interacts with SMAD6. Interacts with TFE3; the interaction is enhanced in the presence of TGF-beta. In terms of assembly, forms a heterodimer with TSC22D4/THG1. Forms a heterodimer with TSC22D4/THG1. Interacts with histone H1-2. Interacts with GNL3. Expressed in bone marrow cells (at protein level). Expressed in T-cells. Expressed in the brain. In terms of tissue distribution, expressed in the myoepithelial cells of the mammary gland ducts and alveoli, expression is consistent throughout pregnancy, lactation and involution (at protein level). Expressed in the cortex, medulla and papilla of the kidney. As to expression, expressed in the myoepithelial cells of the mammary gland, expression significantly increases in the secretory luminal epithelium of the mammary gland at the initiation of involution, with levels decreasing from day 3 of involution onwards (at protein level). Expressed in the cortex, medulla and papilla of the kidney.

The protein localises to the cytoplasm. It is found in the nucleus. The protein resides in the cell membrane. Its subcellular location is the mitochondrion. Its function is as follows. Transcriptional repressor. Acts on the C-type natriuretic peptide (CNP) promoter. Acts to promote CASP3-mediated apoptosis. Positively regulates TGF-beta signaling by interacting with SMAD7 which inhibits binding of SMAD7 to TGFBR1, preventing recruitment of SMURF ubiquitin ligases to TGFBR1 and inhibiting SMURF-mediated ubiquitination and degradation of TGFBR1. Contributes to enhancement of TGF-beta signaling by binding to and modulating the transcription activator activity of SMAD4. Promotes TGF-beta-induced transcription of COL1A2; via its interaction with TFE3 at E-boxes in the gene proximal promoter. Plays a role in the repression of hematopoietic precursor cell growth. Promotes IL2 deprivation-induced apoptosis in T-lymphocytes, via repression of TSC22D3/GILZ transcription and activation of the caspase cascade. May act to negatively regulate TGFB3 signaling and thereby inhibit cell death in mammary gland cells. In terms of biological role, positively regulates cell death in response to TGFB3 during mammary gland involution. This Mus musculus (Mouse) protein is TSC22 domain family protein 1.